The primary structure comprises 1441 residues: Tripeptidyl-peptidase 2 (1441 aa).

Positions 62–89 are disordered; sequence AESSERSNSSKKTTNKEQSDKSAESRMA. The span at 75–85 shows a compositional bias: basic and acidic residues; it reads TNKEQSDKSAE. Residues 107–608 enclose the Peptidase S8 domain; that stretch reads ETGVLNFLQK…HGLLNVEKAF (502 aa). Residues D131, H359, and S549 each act as charge relay system in the active site. Residues 1139–1155 are compositionally biased toward low complexity; it reads TANGAKPKAPATPQAAT. Disordered regions lie at residues 1139-1190 and 1255-1274; these read TANG…KANA and QKTS…EDQK. At S1182 the chain carries Phosphoserine. Positions 1265-1274 are enriched in basic and acidic residues; the sequence is SADKQKEDQK.

This sequence belongs to the peptidase S8 family. Homooligomer; forms a complex of 6 MDa probably composed of 40 subunits. Forms a structure consisting of 2 segmented and twisted strands that form a spindle-shaped structure. Each strand is composed of 10 segments (a segment being a homodimer oriented head to head), stacking of these segments leads to the formation of a twisted single strand. 2 strands compose the fully assembled spindle.

The protein resides in the cytoplasm. It catalyses the reaction Release of an N-terminal tripeptide from a polypeptide.. Inhibited by phenylmethanesulfonyl fluoride (PMSF) and butabindide, but not by peptidase inhibitor pepstatin, EDTA, nor bestatin. Component of the proteolytic cascade acting downstream of the 26S proteasome in the ubiquitin-proteasome pathway. Efficiently cleaves Ala-Ala-Ala-polypeptide and Pro-Pro-Ala-polypeptide, Val-Leu-Lys-polypeptide only at high concentration. Does not cleave Ala-Phe-Pro-polypeptide nor Pro-Leu-Gly-polypeptide. The protein is Tripeptidyl-peptidase 2 (TppII) of Drosophila melanogaster (Fruit fly).